The chain runs to 401 residues: Dual-specificity RNA methyltransferase RlmN (401 aa).

The active-site Proton acceptor is the Glu114. Residues 120–365 (DKGRGTLCVS…TIVRRTRGDD (246 aa)) form the Radical SAM core domain. Cys127 and Cys370 are oxidised to a cystine. [4Fe-4S] cluster contacts are provided by Cys134, Cys138, and Cys141. S-adenosyl-L-methionine is bound by residues 187 to 188 (GE), Ser219, 241 to 243 (SLH), and Asn327. Catalysis depends on Cys370, which acts as the S-methylcysteine intermediate.

It belongs to the radical SAM superfamily. RlmN family. [4Fe-4S] cluster is required as a cofactor.

The protein resides in the cytoplasm. It carries out the reaction adenosine(2503) in 23S rRNA + 2 reduced [2Fe-2S]-[ferredoxin] + 2 S-adenosyl-L-methionine = 2-methyladenosine(2503) in 23S rRNA + 5'-deoxyadenosine + L-methionine + 2 oxidized [2Fe-2S]-[ferredoxin] + S-adenosyl-L-homocysteine. The catalysed reaction is adenosine(37) in tRNA + 2 reduced [2Fe-2S]-[ferredoxin] + 2 S-adenosyl-L-methionine = 2-methyladenosine(37) in tRNA + 5'-deoxyadenosine + L-methionine + 2 oxidized [2Fe-2S]-[ferredoxin] + S-adenosyl-L-homocysteine. Functionally, specifically methylates position 2 of adenine 2503 in 23S rRNA and position 2 of adenine 37 in tRNAs. m2A2503 modification seems to play a crucial role in the proofreading step occurring at the peptidyl transferase center and thus would serve to optimize ribosomal fidelity. The sequence is that of Dual-specificity RNA methyltransferase RlmN from Xanthomonas oryzae pv. oryzae (strain MAFF 311018).